A 118-amino-acid polypeptide reads, in one-letter code: Succinate dehydrogenase assembly factor 4, mitochondrial (118 aa).

A mitochondrion-targeting transit peptide spans 1 to 30 (MQSVTRQTARVLPQMGKQVSYLSTSGAWRA). A disordered region spans residues 65–118 (GKLDEFSRHPYQEKEPLKPWPNQTNPYTGEIGGPAGPEPTRYGDWERKGRVSDF). Composition is skewed to basic and acidic residues over residues 66-81 (KLDEFSRHPYQEKEPL) and 105-118 (RYGDWERKGRVSDF).

This sequence belongs to the SDHAF4 family. Interacts with SdhA in its FAD-bound form.

It is found in the mitochondrion matrix. Functionally, plays an essential role in the assembly of succinate dehydrogenase (SDH), an enzyme complex (also referred to as respiratory complex II) that is a component of both the tricarboxylic acid (TCA) cycle and the mitochondrial electron transport chain, and which couples the oxidation of succinate to fumarate with the reduction of ubiquinone (coenzyme Q) to ubiquinol. Binds to the flavoprotein subunit SdhA in its FAD-bound form, blocking the generation of excess reactive oxygen species (ROS) and facilitating its assembly with the iron-sulfur protein subunit SdhB into the SDH catalytic dimer. In Drosophila melanogaster (Fruit fly), this protein is Succinate dehydrogenase assembly factor 4, mitochondrial.